The primary structure comprises 122 residues: Large ribosomal subunit protein uL14 (122 aa).

The protein belongs to the universal ribosomal protein uL14 family. Part of the 50S ribosomal subunit. Forms a cluster with proteins L3 and L19. In the 70S ribosome, L14 and L19 interact and together make contacts with the 16S rRNA in bridges B5 and B8.

In terms of biological role, binds to 23S rRNA. Forms part of two intersubunit bridges in the 70S ribosome. The polypeptide is Large ribosomal subunit protein uL14 (Staphylococcus carnosus (strain TM300)).